Reading from the N-terminus, the 309-residue chain is 2-phosphoglycerate kinase (309 aa).

The ATP-cone domain maps to 5–92 (NDIIVRGKSY…LWRMVLGRRP (88 aa)).

It belongs to the 2-phosphoglycerate kinase family. A divalent metal cation is required as a cofactor.

The enzyme catalyses (2R)-2-phosphoglycerate + ATP = (2R)-2,3-bisphosphoglycerate + ADP + H(+). The protein operates within thermoadapter biosynthesis; cyclic 2,3-diphosphoglycerate biosynthesis; cyclic 2,3-diphosphoglycerate from 2-phospho-D-glycerate: step 1/2. Its function is as follows. Catalyzes the phosphorylation of 2-phosphoglycerate to 2,3-diphosphoglycerate. Involved in the biosynthesis of cyclic 2,3-bisphosphoglycerate, a thermoprotectant. The chain is 2-phosphoglycerate kinase from Methanocaldococcus jannaschii (strain ATCC 43067 / DSM 2661 / JAL-1 / JCM 10045 / NBRC 100440) (Methanococcus jannaschii).